A 492-amino-acid chain; its full sequence is N-succinylglutamate 5-semialdehyde dehydrogenase (492 aa).

Residue 220–225 (GSANTG) coordinates NAD(+). Active-site residues include Glu-243 and Cys-277.

The protein belongs to the aldehyde dehydrogenase family. AstD subfamily.

It carries out the reaction N-succinyl-L-glutamate 5-semialdehyde + NAD(+) + H2O = N-succinyl-L-glutamate + NADH + 2 H(+). The protein operates within amino-acid degradation; L-arginine degradation via AST pathway; L-glutamate and succinate from L-arginine: step 4/5. Its function is as follows. Catalyzes the NAD-dependent reduction of succinylglutamate semialdehyde into succinylglutamate. This is N-succinylglutamate 5-semialdehyde dehydrogenase from Shigella flexneri.